We begin with the raw amino-acid sequence, 470 residues long: 5-hydroxytryptamine receptor 2A (470 aa).

Residues 1–80 (MDILCEENTS…LQEKNWSALL (80 aa)) are Extracellular-facing. N-linked (GlcNAc...) asparagine glycosylation occurs at Asn38. The chain crosses the membrane as a helical span at residues 81–97 (TAVVIILTIAGNILVIM). Over 98–111 (AVSLEKKLQNATNY) the chain is Cytoplasmic. A helical membrane pass occupies residues 112-137 (FLMSLAIADMLLGFLVMPVSTLTILY). The Extracellular segment spans residues 138–146 (GYRWPLPSK). A helical transmembrane segment spans residues 147–171 (LCAVWIYLDVLFSTASIMHLCAISL). An intrachain disulfide couples Cys148 to Cys227. Asp155 serves as a coordination point for serotonin. The DRY motif; important for ligand-induced conformation changes signature appears at 172-174 (DRY). Residues 172–191 (DRYVAIQNPIHHSRFNSRTK) lie on the Cytoplasmic side of the membrane. Residues 192–215 (AFLKIIAVWTISVGISMPIPVFGL) traverse the membrane as a helical segment. Over 216 to 232 (QDDSKVFKEGSCLLADE) the chain is Extracellular. Residues 233-258 (NFVLIGSFVAFFIPLTIMVITYFLTI) traverse the membrane as a helical segment. The Cytoplasmic segment spans residues 259–321 (KSLQKEATLC…QSISNEQKAC (63 aa)). Ser280 bears the Phosphoserine mark. The chain crosses the membrane as a helical span at residues 322–347 (KVLGIVFFLFVVMWCPFFITNIMAVI). Asn342 contacts serotonin. Residues Cys348 and Cys352 are joined by a disulfide bond. Over 348–355 (CKESCNRD) the chain is Extracellular. Residues 356–381 (VIEALLNVFVWIGYLSSAVNPLVYTL) form a helical membrane-spanning segment. The short motif at 375–379 (NPLVY) is the NPxxY motif; important for ligand-induced conformation changes and signaling element. The Cytoplasmic segment spans residues 382-470 (FNKTYRSAFS…NTVNEKVSCV (89 aa)). The interval 424 to 470 (QMGPKKNSKKDDKTTDNDCTMVALGKEHPEDAPADSSNTVNEKVSCV) is disordered. Residues 458 to 470 (DSSNTVNEKVSCV) are compositionally biased toward polar residues. Positions 468–470 (SCV) match the PDZ-binding motif.

This sequence belongs to the G-protein coupled receptor 1 family. In terms of assembly, interacts (via C-terminus) with MPDZ and PATJ. May interact (via C-terminus) with MPP3, PRDX6, DLG4, DLG1, CASK, APBA1 and MAGI2. Interacts with GRM2 and DRD2; this may affect signaling.

The protein localises to the cell membrane. Its subcellular location is the cell projection. It localises to the dendrite. The protein resides in the axon. It is found in the cytoplasmic vesicle. The protein localises to the membrane. Its subcellular location is the caveola. It localises to the presynapse. With respect to regulation, G-protein coupled receptor activity is regulated by lipids: oleamide increases HTR2A-mediated activity. G-protein coupled receptor for 5-hydroxytryptamine (serotonin). Also functions as a receptor for various drugs and psychoactive substances, including mescaline, psilocybin, 1-(2,5-dimethoxy-4-iodophenyl)-2-aminopropane (DOI) and lysergic acid diethylamide (LSD). Ligand binding causes a conformation change that triggers signaling via guanine nucleotide-binding proteins (G proteins) and modulates the activity of downstream effectors. HTR2A is coupled to G(q)/G(11) G alpha proteins and activates phospholipase C-beta, releasing diacylglycerol (DAG) and inositol 1,4,5-trisphosphate (IP3) second messengers that modulate the activity of phosphatidylinositol 3-kinase and promote the release of Ca(2+) ions from intracellular stores, respectively. Beta-arrestin family members inhibit signaling via G proteins and mediate activation of alternative signaling pathways. Affects neural activity, perception, cognition and mood. Plays a role in the regulation of behavior, including responses to anxiogenic situations and psychoactive substances. Plays a role in intestinal smooth muscle contraction, and may play a role in arterial vasoconstriction. This Bos taurus (Bovine) protein is 5-hydroxytryptamine receptor 2A (HTR2A).